The chain runs to 158 residues: NAD(P)H-quinone oxidoreductase subunit J, chloroplastic (158 aa).

It belongs to the complex I 30 kDa subunit family. In terms of assembly, NDH is composed of at least 16 different subunits, 5 of which are encoded in the nucleus.

It localises to the plastid. It is found in the chloroplast thylakoid membrane. It catalyses the reaction a plastoquinone + NADH + (n+1) H(+)(in) = a plastoquinol + NAD(+) + n H(+)(out). The catalysed reaction is a plastoquinone + NADPH + (n+1) H(+)(in) = a plastoquinol + NADP(+) + n H(+)(out). In terms of biological role, NDH shuttles electrons from NAD(P)H:plastoquinone, via FMN and iron-sulfur (Fe-S) centers, to quinones in the photosynthetic chain and possibly in a chloroplast respiratory chain. The immediate electron acceptor for the enzyme in this species is believed to be plastoquinone. Couples the redox reaction to proton translocation, and thus conserves the redox energy in a proton gradient. In Trachelium caeruleum (Blue throatwort), this protein is NAD(P)H-quinone oxidoreductase subunit J, chloroplastic.